A 488-amino-acid polypeptide reads, in one-letter code: Probable cytosol aminopeptidase (488 aa).

2 residues coordinate Mn(2+): Lys-253 and Asp-258. Residue Lys-265 is part of the active site. The Mn(2+) site is built by Asp-276, Asp-335, and Glu-337. The active site involves Arg-339.

It belongs to the peptidase M17 family. Requires Mn(2+) as cofactor.

It localises to the cytoplasm. The catalysed reaction is Release of an N-terminal amino acid, Xaa-|-Yaa-, in which Xaa is preferably Leu, but may be other amino acids including Pro although not Arg or Lys, and Yaa may be Pro. Amino acid amides and methyl esters are also readily hydrolyzed, but rates on arylamides are exceedingly low.. It catalyses the reaction Release of an N-terminal amino acid, preferentially leucine, but not glutamic or aspartic acids.. In terms of biological role, presumably involved in the processing and regular turnover of intracellular proteins. Catalyzes the removal of unsubstituted N-terminal amino acids from various peptides. The protein is Probable cytosol aminopeptidase of Dinoroseobacter shibae (strain DSM 16493 / NCIMB 14021 / DFL 12).